Consider the following 231-residue polypeptide: Large ribosomal subunit protein uL1 (231 aa).

It belongs to the universal ribosomal protein uL1 family. In terms of assembly, part of the 50S ribosomal subunit.

Functionally, binds directly to 23S rRNA. The L1 stalk is quite mobile in the ribosome, and is involved in E site tRNA release. Its function is as follows. Protein L1 is also a translational repressor protein, it controls the translation of the L11 operon by binding to its mRNA. The protein is Large ribosomal subunit protein uL1 of Francisella tularensis subsp. tularensis (strain WY96-3418).